The primary structure comprises 379 residues: EP300-interacting inhibitor of differentiation 3 (379 aa).

Positions 32 to 58 form a coiled coil; sequence LKQVEEEEEVEALKVEVAAASDTESDT.

Belongs to the NSE4 family. As to quaternary structure, component of the SMC5-SMC6 complex which consists at least of SMC5, SMC6, NSMCE2, NSMCE1, NSMCE4A or EID3 and NSMCE3. NSMCE1, NSMCE4A or EID3 and NSMCE3 probably form a subcomplex that bridges the head domains of the SMC5:SMC6 heterodimer. Homodimer, and heterodimer with EID2. Interacts with the C-terminal region of CREBBP.

Its subcellular location is the nucleus. It localises to the cytoplasm. The protein localises to the chromosome. The protein resides in the telomere. Functionally, tissue-specific component of the SMC5-SMC6 complex, a complex involved in repair of DNA double-strand breaks by homologous recombination. The complex may promote sister chromatid homologous recombination by recruiting the SMC1-SMC3 cohesin complex to double-strand breaks. The complex is required for telomere maintenance via recombination and mediates sumoylation of shelterin complex (telosome) components. Its function is as follows. Acts as a repressor of nuclear receptor-dependent transcription possibly by interfering with CREBBP-dependent coactivation. May function as a coinhibitor of other CREBBP/EP300-dependent transcription factors. The sequence is that of EP300-interacting inhibitor of differentiation 3 from Bos taurus (Bovine).